The following is a 203-amino-acid chain: Cilia- and flagella-associated protein 20 (203 aa).

Belongs to the CFAP20 family.

It is found in the nucleus. Its subcellular location is the cytoplasm. The protein localises to the cytoskeleton. It localises to the microtubule organizing center. The protein resides in the centrosome. It is found in the centriole. Its subcellular location is the cilium basal body. The protein localises to the cilium axoneme. Its function is as follows. Cilium- and flagellum-specific protein that plays a role in axonemal structure organization and motility. Microtubule inner protein (MIP) part of the dynein-decorated doublet microtubules (DMTs) in cilia axoneme, which is required for motile cilia beating. Involved in the regulation of the size and morphology of cilia. Required for axonemal microtubules polyglutamylation. This chain is Cilia- and flagella-associated protein 20, found in Caenorhabditis elegans.